A 308-amino-acid polypeptide reads, in one-letter code: Glutaminase (308 aa).

Residues serine 66, asparagine 117, glutamate 161, asparagine 168, tyrosine 192, tyrosine 244, and valine 262 each contribute to the substrate site.

The protein belongs to the glutaminase family. Homotetramer.

It catalyses the reaction L-glutamine + H2O = L-glutamate + NH4(+). This is Glutaminase from Salmonella arizonae (strain ATCC BAA-731 / CDC346-86 / RSK2980).